The primary structure comprises 373 residues: Spore germination protein KB (373 aa).

Transmembrane regions (helical) follow at residues 11 to 31 (LFVM…PGSM), 37 to 57 (WIAV…YQGI), 78 to 98 (LSWL…ARVL), 105 to 125 (LLTF…LMVV), 143 to 163 (LLFG…IVSG), 185 to 205 (VFTQ…MIFP), 219 to 239 (IAMA…ISVL), 269 to 289 (VFFM…YLYA), 306 to 326 (LAYP…TNFS), and 338 to 358 (LYIH…VAVW).

It belongs to the amino acid-polyamine-organocation (APC) superfamily. Spore germination protein (SGP) (TC 2.A.3.9) family.

Its subcellular location is the cell membrane. Its function is as follows. Involved in the germination response to the combination of glucose, fructose, L-asparagine, and KCl. The chain is Spore germination protein KB (gerKB) from Bacillus subtilis (strain 168).